A 609-amino-acid chain; its full sequence is Spore coat protein homolog 1 (609 aa).

The signal sequence occupies residues 1–17 (MKSLLFVVFIFLTTTYA). N-linked (GlcNAc...) asparagine glycans are attached at residues asparagine 82, asparagine 397, and asparagine 440. The segment at 527 to 547 (TVTQVPEAPGTDGTPSESTAW) is disordered. Serine 584 is lipidated: GPI-anchor amidated serine. Positions 585-609 (SSSIKRTPCILPLVILASTLFASFF) are cleaved as a propeptide — removed in mature form.

It localises to the cell membrane. Functionally, may play a role in cell adhesion. The polypeptide is Spore coat protein homolog 1 (Rhizopus delemar (strain RA 99-880 / ATCC MYA-4621 / FGSC 9543 / NRRL 43880) (Mucormycosis agent)).